The primary structure comprises 107 residues: Urease subunit beta (107 aa).

The protein belongs to the urease beta subunit family. In terms of assembly, heterotrimer of UreA (gamma), UreB (beta) and UreC (alpha) subunits. Three heterotrimers associate to form the active enzyme.

The protein localises to the cytoplasm. It carries out the reaction urea + 2 H2O + H(+) = hydrogencarbonate + 2 NH4(+). It participates in nitrogen metabolism; urea degradation; CO(2) and NH(3) from urea (urease route): step 1/1. This chain is Urease subunit beta, found in Teredinibacter turnerae (strain ATCC 39867 / T7901).